The chain runs to 1079 residues: Electrogenic sodium bicarbonate cotransporter 1 (1079 aa).

The required for interaction with AHCYL1 stretch occupies residues 1–62 (MEDEAVLDRG…EKREKERISE (62 aa)). The Cytoplasmic portion of the chain corresponds to 1–466 (MEDEAVLDRG…FASDFYDALN (466 aa)). Tyr-30 is subject to Phosphotyrosine. Residues 39–52 (YRRRRRHKRKTGHK) show a composition bias toward basic residues. The interval 39-78 (YRRRRRHKRKTGHKEKREKERISENYSDKSDVENADESSS) is disordered. Position 49 is a phosphothreonine; by PKA (Thr-49). A compositionally biased stretch (basic and acidic residues) spans 53–70 (EKREKERISENYSDKSDV). Phosphoserine occurs at positions 61, 65, 68, 223, 232, 233, and 245. Residues 237 to 265 (MFTSPDNGSPAMTHRNLTSSSLNDISDKP) form a disordered region. Residues Thr-249 and Thr-254 each carry the phosphothreonine modification. The segment covering 251–260 (RNLTSSSLND) has biased composition (polar residues). 3 positions are modified to phosphoserine: Ser-256, Ser-257, and Ser-262. The chain crosses the membrane as a helical span at residues 467–491 (IQSLSAILFIYLATVTNAITFGGLL). Over 492–501 (GDATDNMQGV) the chain is Extracellular. A helical transmembrane segment spans residues 502–520 (LESFLGTAVSGAIFCLFAG). Gln-521 is a topological domain (cytoplasmic). The discontinuously helical transmembrane segment at 522-542 (PLTILSSTGPVLVFERLLFNF) threads the bilayer. Residues 543–550 (SKDHNFDY) are Extracellular-facing. Residues 551–571 (LEFRLWIGLWSAFLCLILVAT) traverse the membrane as a helical segment. Residues 572-585 (DASFLVQYFTRFTE) are Cytoplasmic-facing. Residues 586-609 (EGFSSLISFIFIYDAFKKMIKLAD) traverse the membrane as a helical segment. The Extracellular segment spans residues 610-692 (YYPINSDFKV…GNNCNFVPDV (83 aa)). Residues 693–710 (TLMSFILFLGTYTSSMAL) traverse the membrane as a helical segment. Residues 711–725 (KKFKTSRYFPTTARK) lie on the Cytoplasmic side of the membrane. Residues 726–745 (LISDFAIILSILIFCVIDAL) traverse the membrane as a helical segment. The Extracellular portion of the chain corresponds to 746-779 (VGVDTPKLIVPSEFKPTSPNRGWFVPPFGGNPWW). The interval 748-779 (VDTPKLIVPSEFKPTSPNRGWFVPPFGGNPWW) is interaction with CA4. Residues 780–807 (VYLAAAIPALLVTILIFMDQQITAVIVN) form a helical membrane-spanning segment. Residues 808-819 (RKEHKLKKGAGY) are Cytoplasmic-facing. The helical transmembrane segment at 820–836 (HLDLFWVAILMVVCSFM) threads the bilayer. Residue Ala-837 is a topological domain, extracellular. Residues 838-855 (LPWYVAATVISIAHIDSL) traverse the membrane as a discontinuously helical segment. The Cytoplasmic portion of the chain corresponds to 856–877 (KMETETSAPGEQPKFLGVREQR). The helical transmembrane segment at 878–894 (VTGTLVFILTGLSVFMA) threads the bilayer. Topologically, residues 895 to 901 (PILKFIP) are extracellular. A helical membrane pass occupies residues 902 to 918 (MPVLYGVFLYMGVASLN). The Cytoplasmic portion of the chain corresponds to 919–960 (GVQFMDRLKLLLMPLKHQPDFIYLRHVPLRRVHLFTFLQVLC). An intramembrane region (discontinuously helical) is located at residues 961 to 986 (LALLWILKSTVAAIIFPVMILALVAV). Residues 987–1079 (RKGMDYLFSQ…STFLERHTSC (93 aa)) lie on the Cytoplasmic side of the membrane. A CA2-binding region spans residues 1002–1004 (LDD). Residues 1012-1079 (KKKEDEKKKK…STFLERHTSC (68 aa)) form a disordered region. At Ser-1026 the chain carries Phosphoserine; by PKA. Ser-1029 carries the post-translational modification Phosphoserine. A CA2-binding region spans residues 1030–1033 (DNDD). 2 positions are modified to phosphoserine: Ser-1034 and Ser-1044. The required for basolateral targeting stretch occupies residues 1057-1059 (FLS). Over residues 1062 to 1079 (KPSDREKSSTFLERHTSC) the composition is skewed to basic and acidic residues. Ser-1069 bears the Phosphoserine mark.

This sequence belongs to the anion exchanger (TC 2.A.31) family. In terms of assembly, homodimer. Interacts with CA2/carbonic anhydrase 2 and CA4/carbonic anhydrase 4 which may regulate transporter activity. Isoform 1 but not isoform 2 interacts with AHCYL1 (via PEST domain when phosphorylated); the interaction increases SLC4A4 isoform 1 activity. Interacts with AHCYL2. In terms of processing, phosphorylation of Ser-1026 by PKA increases the binding of CA2 and changes the Na(+):HCO3(-) stoichiometry of the transporter from 3:1 to 2:1. Phosphorylated in presence of STK39 and dephosphorylated in presence of PP1 phosphatase; phosphorylation seems to inhibit SLC4A4 activity. N-glycosylated. May not be necessary for the transporter basic functions. Expressed in colonic mucosa, kidney cortex and to gastric mucosa.

It is found in the basolateral cell membrane. Its subcellular location is the cell membrane. The enzyme catalyses 2 hydrogencarbonate(out) + Na(+)(out) = 2 hydrogencarbonate(in) + Na(+)(in). It catalyses the reaction 3 hydrogencarbonate(out) + Na(+)(out) = 3 hydrogencarbonate(in) + Na(+)(in). Electrogenic sodium/bicarbonate cotransporter with a Na(+):HCO3(-) stoichiometry varying from 1:2 to 1:3. May regulate bicarbonate influx/efflux at the basolateral membrane of cells and regulate intracellular pH. The chain is Electrogenic sodium bicarbonate cotransporter 1 (SLC4A4) from Oryctolagus cuniculus (Rabbit).